A 350-amino-acid chain; its full sequence is Biotin synthase (350 aa).

One can recognise a Radical SAM core domain in the interval 38-262; sequence RQVQVSTLLS…MMPTSYVRLS (225 aa). Cys-53, Cys-57, and Cys-60 together coordinate [4Fe-4S] cluster. The [2Fe-2S] cluster site is built by Cys-97, Cys-128, Cys-188, and Arg-260.

Belongs to the radical SAM superfamily. Biotin synthase family. Homodimer. [4Fe-4S] cluster serves as cofactor. The cofactor is [2Fe-2S] cluster.

It carries out the reaction (4R,5S)-dethiobiotin + (sulfur carrier)-SH + 2 reduced [2Fe-2S]-[ferredoxin] + 2 S-adenosyl-L-methionine = (sulfur carrier)-H + biotin + 2 5'-deoxyadenosine + 2 L-methionine + 2 oxidized [2Fe-2S]-[ferredoxin]. The protein operates within cofactor biosynthesis; biotin biosynthesis; biotin from 7,8-diaminononanoate: step 2/2. Catalyzes the conversion of dethiobiotin (DTB) to biotin by the insertion of a sulfur atom into dethiobiotin via a radical-based mechanism. The chain is Biotin synthase from Yersinia enterocolitica serotype O:8 / biotype 1B (strain NCTC 13174 / 8081).